A 359-amino-acid chain; its full sequence is MNIYDQLQAVEDRYEELGELLSDPDVVSDTKRFMELSREEANTRETVTAYREYKQVIQTISDAEEMIKDASGDPELEEMAKEELKESKAAKEEYEEKLKILLLPKDPNDDKNIILEIRGAAGGDEAALFAGDLLTMYQKYAETQGWRFEVMESSVNGVGGIKEVVAMVSGQSVYSKLKYESGAHRVQRVPVTESQGRVHTSTATVLVMPEVEEVEYDIDQKDLRVDIYHASGAGGQNVNKVATAVRMVHIPTGIKVEMQEERTQQKNRDKAMKIIRARVADHFAQIAQDEQDAERKSTVGTGDRSERIRTYNFPQNRVTDHRIGLTLQKLDIILSGKMDEVIDALVMYDQTKKLESLNN.

N5-methylglutamine is present on Q236.

It belongs to the prokaryotic/mitochondrial release factor family. Methylated by PrmC. Methylation increases the termination efficiency of RF1.

It localises to the cytoplasm. In terms of biological role, peptide chain release factor 1 directs the termination of translation in response to the peptide chain termination codons UAG and UAA. This chain is Peptide chain release factor 1, found in Streptococcus pyogenes serotype M18 (strain MGAS8232).